We begin with the raw amino-acid sequence, 1064 residues long: Adenylate cyclase type 4 (1064 aa).

Residues 1-28 (MARLFSPRPPPSEDLFYETYYSLSQQYP) are Cytoplasmic-facing. The next 6 membrane-spanning stretches (helical) occupy residues 29–50 (LLIL…VAWA), 61–80 (FLTT…GLAS), 94–117 (GLIW…VSAW), 120–138 (VSFF…PLGM), 141–162 (AAAA…YLGW), and 170–190 (LLPQ…VGAY). The Cytoplasmic segment spans residues 191-582 (HKALMERALR…YRLSALPAFK (392 aa)). Positions 278, 279, and 322 each coordinate Mg(2+). Residues 278-283 (DIVGFT), 320-322 (LGD), and arginine 366 contribute to the ATP site. The tract at residues 498–523 (DSPASTSTPLPEKAFSPQWSLDRSRT) is disordered. The residue at position 517 (serine 517) is a Phosphoserine. Threonine 533 bears the Phosphothreonine mark. 3 helical membrane passes run 583 to 604 (YYAA…LVTT), 608 to 630 (ALAT…CFSE), and 661 to 684 (VALG…FLPV). Residues 685-707 (SSDCPFLAPNVSSVAFNTSWELP) are Extracellular-facing. Asparagine 694 and asparagine 701 each carry an N-linked (GlcNAc...) asparagine glycan. Helical transmembrane passes span 708–733 (ASLP…SLFL), 741–761 (LLLL…SHAW), and 788–804 (MGAI…LVLA). Topologically, residues 805-1064 (RQNEYYCRLD…LTRTGSPSAS (260 aa)) are cytoplasmic. ATP-binding positions include lysine 914, 994–996 (DIW), 1001–1005 (NVASR), and lysine 1041.

The protein belongs to the adenylyl cyclase class-4/guanylyl cyclase family. The cofactor is Mg(2+). Requires Mn(2+) as cofactor. In terms of tissue distribution, widely distributed.

Its subcellular location is the cell membrane. The protein localises to the cytoplasm. It carries out the reaction ATP = 3',5'-cyclic AMP + diphosphate. Its activity is regulated as follows. Activated by forskolin. Insensitive to calcium/calmodulin. Stimulated by GNAS and by the G-protein beta and gamma subunit complex. Its function is as follows. Catalyzes the formation of the signaling molecule cAMP in response to G-protein signaling. This Rattus norvegicus (Rat) protein is Adenylate cyclase type 4 (Adcy4).